A 431-amino-acid chain; its full sequence is Enolase (431 aa).

Glutamine 163 lines the (2R)-2-phosphoglycerate pocket. Catalysis depends on glutamate 205, which acts as the Proton donor. Residues aspartate 242, glutamate 283, and aspartate 310 each contribute to the Mg(2+) site. Residues lysine 335, arginine 364, serine 365, and lysine 386 each coordinate (2R)-2-phosphoglycerate. Lysine 335 functions as the Proton acceptor in the catalytic mechanism.

The protein belongs to the enolase family. Requires Mg(2+) as cofactor.

The protein resides in the cytoplasm. It localises to the secreted. It is found in the cell surface. It catalyses the reaction (2R)-2-phosphoglycerate = phosphoenolpyruvate + H2O. It functions in the pathway carbohydrate degradation; glycolysis; pyruvate from D-glyceraldehyde 3-phosphate: step 4/5. Catalyzes the reversible conversion of 2-phosphoglycerate (2-PG) into phosphoenolpyruvate (PEP). It is essential for the degradation of carbohydrates via glycolysis. The polypeptide is Enolase (Kineococcus radiotolerans (strain ATCC BAA-149 / DSM 14245 / SRS30216)).